The following is a 152-amino-acid chain: Succinate dehydrogenase [ubiquinone] cytochrome b small subunit B, mitochondrial (152 aa).

The N-terminal 21 residues, 1-21 (MATLLRVSSLCRANRASAFKS), are a transit peptide targeting the mitochondrion. Residues 22–56 (LLIRPLPCLSQDLHMVQTSQIHTSPNHHAGSKAAS) lie on the Mitochondrial matrix side of the membrane. The helical transmembrane segment at 57–78 (MHWTGERALSVALLGLLPAAYL) threads the bilayer. Residues 79 to 83 (YPGAA) are Mitochondrial intermembrane-facing. The helical transmembrane segment at 84-104 (MDYSLAAALTLHGHWGLGQVV) threads the bilayer. His95 contacts heme b. The Mitochondrial matrix segment spans residues 105–113 (TDYVHGETK). Tyr107 is a binding site for a ubiquinone. Residues 114 to 135 (IKMANTSLFALSALTFAGLCYF) form a helical membrane-spanning segment. At 136–152 (NYHDVGICKAVAMLWSL) the chain is on the mitochondrial intermembrane side.

Belongs to the CybS family. Component of complex II composed of four subunits: the flavoprotein (FP) SDHA, iron-sulfur protein (IP) SDHB, and a cytochrome b560 composed of SDHC and SDHD.

It is found in the mitochondrion inner membrane. It functions in the pathway carbohydrate metabolism; tricarboxylic acid cycle. Functionally, membrane-anchoring subunit of succinate dehydrogenase (SDH) that is involved in complex II of the mitochondrial electron transport chain and is responsible for transferring electrons from succinate to ubiquinone (coenzyme Q). SDH also oxidizes malate to the non-canonical enol form of oxaloacetate, enol-oxaloacetate. Enol-oxaloacetate, which is a potent inhibitor of the succinate dehydrogenase activity, is further isomerized into keto-oxaloacetate. The polypeptide is Succinate dehydrogenase [ubiquinone] cytochrome b small subunit B, mitochondrial (sdhd-b) (Xenopus laevis (African clawed frog)).